The following is a 117-amino-acid chain: Ribosomal silencing factor RsfS (117 aa).

The protein belongs to the Iojap/RsfS family. In terms of assembly, interacts with ribosomal protein uL14 (rplN).

It localises to the cytoplasm. Functions as a ribosomal silencing factor. Interacts with ribosomal protein uL14 (rplN), blocking formation of intersubunit bridge B8. Prevents association of the 30S and 50S ribosomal subunits and the formation of functional ribosomes, thus repressing translation. This chain is Ribosomal silencing factor RsfS, found in Halalkalibacterium halodurans (strain ATCC BAA-125 / DSM 18197 / FERM 7344 / JCM 9153 / C-125) (Bacillus halodurans).